The chain runs to 753 residues: Nuclear hormone receptor family member daf-12 (753 aa).

Positions 1–109 (MGTNGGVIAE…PDDGLLDSSE (109 aa)) are disordered. Basic and acidic residues predominate over residues 20 to 29 (NPDKVEEPVV). The segment covering 30 to 44 (RRKRVTRRRHRRIHS) has biased composition (basic residues). Positions 115-190 (QKTCRVCGDH…VGMKKEWILN (76 aa)) form a DNA-binding region, nuclear receptor. 2 consecutive NR C4-type zinc fingers follow at residues 118-138 (CRVC…CESC) and 154-173 (CPYS…CQKC). The short motif at 191 to 206 (EEQLRRRKNSRLNNTG) is the Nuclear localization signal element. Disordered regions lie at residues 198-251 (KNSR…TINP), 266-314 (NAMP…GYDP), and 376-410 (GHPM…EKNH). Polar residues predominate over residues 201 to 211 (RLNNTGTCNKR). The segment covering 212 to 227 (SQPGNQQSPQGPNQQP) has biased composition (low complexity). 2 stretches are compositionally biased toward polar residues: residues 285–301 (PVGS…SLTM) and 394–410 (MSLS…EKNH). Positions 516–753 (AELKALDAVR…ELPGEFFKIK (238 aa)) constitute an NR LBD domain.

It belongs to the nuclear hormone receptor family. As to quaternary structure, interacts with din-1 isoform d. Expressed throughout muscles of the pharynx. Expressed in epidermal seam cells, the vulva, head neurons, mature spermatheca, uterus and intestine.

It localises to the nucleus. Nuclear receptor which binds directly to response elements in target gene promoters. Activity is modulated by binding of steroid hormone ligands that include dafachronic acids. Regulates expression of genes involved in postembryonic development and the dauer diapause, in response to environmental cues. Inhibits the expression of let-7 family members when bound to corepressor din-1s which is an isoform of din-1. Plays a role in controlling the timing of seam cell development during the larval stages. Has a role in the immune response to bacterial infection, via regulation of let-7 miRNAs. Controls expression of genes that promote the aerobic catabolism of fatty acids for reproductive growth. May be involved in thermotolerance. The sequence is that of Nuclear hormone receptor family member daf-12 from Caenorhabditis elegans.